The sequence spans 603 residues: Elongation factor 4 (603 aa).

In terms of domain architecture, tr-type G spans 6 to 188 (SKIRNFCIIA…QIVKKIPAPT (183 aa)). Residues 18-23 (DHGKST) and 135-138 (NKVD) contribute to the GTP site.

Belongs to the TRAFAC class translation factor GTPase superfamily. Classic translation factor GTPase family. LepA subfamily.

The protein localises to the cell membrane. It catalyses the reaction GTP + H2O = GDP + phosphate + H(+). In terms of biological role, required for accurate and efficient protein synthesis under certain stress conditions. May act as a fidelity factor of the translation reaction, by catalyzing a one-codon backward translocation of tRNAs on improperly translocated ribosomes. Back-translocation proceeds from a post-translocation (POST) complex to a pre-translocation (PRE) complex, thus giving elongation factor G a second chance to translocate the tRNAs correctly. Binds to ribosomes in a GTP-dependent manner. The chain is Elongation factor 4 from Agathobacter rectalis (strain ATCC 33656 / DSM 3377 / JCM 17463 / KCTC 5835 / VPI 0990) (Eubacterium rectale).